A 228-amino-acid chain; its full sequence is Ribosomal RNA small subunit methyltransferase G (228 aa).

Residues Gly-89, Leu-94, 140–141 (VE), and Arg-159 each bind S-adenosyl-L-methionine.

The protein belongs to the methyltransferase superfamily. RNA methyltransferase RsmG family.

It is found in the cytoplasm. The catalysed reaction is guanosine(527) in 16S rRNA + S-adenosyl-L-methionine = N(7)-methylguanosine(527) in 16S rRNA + S-adenosyl-L-homocysteine. Functionally, specifically methylates the N7 position of guanine in position 527 of 16S rRNA. In Burkholderia lata (strain ATCC 17760 / DSM 23089 / LMG 22485 / NCIMB 9086 / R18194 / 383), this protein is Ribosomal RNA small subunit methyltransferase G.